We begin with the raw amino-acid sequence, 373 residues long: XK-related protein 9 (373 aa).

A run of 8 helical transmembrane segments spans residues 8–28 (FMMSVLGIIIYVTDLIVDIWV), 38–58 (YVFSALALSFMLFGTLVAQCF), 166–186 (AAIMVSCCAISWSTVDYQVAL), 203–223 (ITYLFYKLFTLLSWMLSVVLL), 224–244 (LFLNVKIALFLLLFLWLLGII), 256–276 (CISMEFLYRIVVGFILIFTFF), 295–315 (VLGTLGILTVFWVCPLNIFNP), and 318–338 (FIPISITIVLTLLLGILFLIV).

It belongs to the XK family. In terms of processing, undergoes proteolytic processing by caspase-3 (CASP3), caspase-6 (CASP6) and caspase-7 (CASP7) to generate the XK-related protein 9, processed form, leading to its activation.

The protein resides in the cell membrane. It catalyses the reaction a 1,2-diacyl-sn-glycero-3-phospho-L-serine(in) = a 1,2-diacyl-sn-glycero-3-phospho-L-serine(out). Activated upon caspase cleavage to generate the XK-related protein 9, processed form. Does not act prior the onset of apoptosis. In terms of biological role, phospholipid scramblase that promotes phosphatidylserine exposure on apoptotic cell surface. Phosphatidylserine is a specific marker only present at the surface of apoptotic cells and acts as a specific signal for engulfment. The protein is XK-related protein 9 of Pan troglodytes (Chimpanzee).